Here is a 380-residue protein sequence, read N- to C-terminus: L-lactate dehydrogenase (380 aa).

The region spanning 1 to 380 (MIISSASDYR…DASILVKAVA (380 aa)) is the FMN hydroxy acid dehydrogenase domain. Position 24 (Tyr24) interacts with substrate. Residues Ser106 and Gln127 each contribute to the FMN site. Position 129 (Tyr129) interacts with substrate. An FMN-binding site is contributed by Thr155. Position 164 (Arg164) interacts with substrate. Lys251 contacts FMN. His275 (proton acceptor) is an active-site residue. Substrate is bound at residue Arg278. 306 to 330 (DSGIRSGLDVVRMLALGAKGVLLGR) serves as a coordination point for FMN.

This sequence belongs to the FMN-dependent alpha-hydroxy acid dehydrogenase family. As to quaternary structure, homotetramer. It depends on FMN as a cofactor.

It localises to the cell inner membrane. It catalyses the reaction (S)-lactate + A = pyruvate + AH2. Functionally, catalyzes the conversion of L-lactate to pyruvate. Is coupled to the respiratory chain. This chain is L-lactate dehydrogenase, found in Pseudomonas syringae pv. syringae (strain B728a).